A 287-amino-acid polypeptide reads, in one-letter code: MAIRTFRPYTPGTRTRVVTDFNEVTGRKPERSLVVAKHRRKGRNNRGVITCRHRGGGHKRLYRIVDFRRNKHGIPAKVAAIHYDPHRNAHLALLFYTDGEKRYILAPNGIAIGQQLISGPESPIETGNALPLSAIPLGSSVHNVELYAGRGGQMARTAGSSAQVMAKEGDYVALKLPSTEVRLVRHECYATLGEVGNSEVRNTSLGKAGRRRWLGRRPQVRGSVMNPCDHPHGGGEGRAPIGRSGPVTPWGKPALGLKTRKRNKPSNRFVLRKRRRTSKRSRGGRDS.

Positions 221-287 (RGSVMNPCDH…SKRSRGGRDS (67 aa)) are disordered. A compositionally biased stretch (basic residues) spans 258–287 (KTRKRNKPSNRFVLRKRRRTSKRSRGGRDS).

Belongs to the universal ribosomal protein uL2 family. In terms of assembly, part of the 50S ribosomal subunit. Forms a bridge to the 30S subunit in the 70S ribosome.

One of the primary rRNA binding proteins. Required for association of the 30S and 50S subunits to form the 70S ribosome, for tRNA binding and peptide bond formation. It has been suggested to have peptidyltransferase activity; this is somewhat controversial. Makes several contacts with the 16S rRNA in the 70S ribosome. The sequence is that of Large ribosomal subunit protein uL2 from Prochlorococcus marinus (strain MIT 9303).